The sequence spans 658 residues: Staphylocoagulase (658 aa).

The N-terminal stretch at 1–26 (MKKQIISLGALAVASSLFTWDNKADA) is a signal peptide. Composition is skewed to polar residues over residues 391-406 (MEQNRPSLSDNYTQPT), 428-440 (GTESTLKGIQGES), 499-514 (PSETNAYNVTTNQDGT), and 521-531 (PTQNKPSETNA). Residues 391 to 531 (MEQNRPSLSD…TQNKPSETNA (141 aa)) form a disordered region. 6 tandem repeats follow at residues 492 to 518 (ARPRFNKPSETNAYNVTTNQDGTVSYG), 519 to 545 (ARPTQNKPSETNAYNVTTHANGQVSYG), 546 to 572 (ARPTQNKPSKTNAYNVTTHANGQVSYG), 573 to 599 (ARPTQKKPSKTNAYNVTTHANGQVSYG), 600 to 626 (ARPTYKKPSETNAYNVTTHANGQVSYG), and 627 to 653 (ARPTQKKPSETNAYNVTTHADGTATYG). The interval 492-653 (ARPRFNKPSE…THADGTATYG (162 aa)) is 6 X 27 AA tandem repeats of A-R-P-[RT]-[FQY]-[NK]-K-P-S-[EK]-T-N-A-Y-N-V-T-T-[NH]-[QA]-[DN]-G-[TQ]-[VA]-[ST]-Y-G. Positions 619 to 658 (ANGQVSYGARPTQKKPSETNAYNVTTHADGTATYGPRVTK) are disordered. Polar residues predominate over residues 636–646 (ETNAYNVTTHA).

This sequence belongs to the staphylocoagulase family.

Staphylocoagulase is an extracellular protein which specifically forms a complex with human prothrombin. This complex named staphylothrombin can clot fibrinogen without any proteolytic cleavage of prothrombin. The polypeptide is Staphylocoagulase (Staphylococcus aureus).